The sequence spans 232 residues: Uracil phosphoribosyltransferase (232 aa).

38–42 (KGLVK) serves as a coordination point for GTP. 5-phospho-alpha-D-ribose 1-diphosphate is bound by residues Arg87, Arg112, and 140–148 (DPMIATGST). Uracil-binding positions include Ile204 and 209–211 (GDA). Asp210 is a binding site for 5-phospho-alpha-D-ribose 1-diphosphate.

The protein belongs to the UPRTase family. The cofactor is Mg(2+).

The catalysed reaction is UMP + diphosphate = 5-phospho-alpha-D-ribose 1-diphosphate + uracil. It functions in the pathway pyrimidine metabolism; UMP biosynthesis via salvage pathway; UMP from uracil: step 1/1. Allosterically activated by GTP. Functionally, catalyzes the conversion of uracil and 5-phospho-alpha-D-ribose 1-diphosphate (PRPP) to UMP and diphosphate. The sequence is that of Uracil phosphoribosyltransferase from Thermococcus sibiricus (strain DSM 12597 / MM 739).